Here is a 451-residue protein sequence, read N- to C-terminus: UDP-N-acetylmuramate--L-alanine ligase (451 aa).

110-116 (GTHGKTT) is an ATP binding site.

Belongs to the MurCDEF family.

It is found in the cytoplasm. The catalysed reaction is UDP-N-acetyl-alpha-D-muramate + L-alanine + ATP = UDP-N-acetyl-alpha-D-muramoyl-L-alanine + ADP + phosphate + H(+). It functions in the pathway cell wall biogenesis; peptidoglycan biosynthesis. Cell wall formation. This chain is UDP-N-acetylmuramate--L-alanine ligase, found in Francisella tularensis subsp. mediasiatica (strain FSC147).